The chain runs to 331 residues: Meiotic recombination protein W68 (331 aa).

One can recognise a Topo IIA-type catalytic domain in the interval 1 to 120 (MDEFSENIER…LGILAASKGL (120 aa)). Catalysis depends on Y81, which acts as the O-(5'-phospho-DNA)-tyrosine intermediate. The Mg(2+) site is built by E167 and D221.

The protein belongs to the TOP6A family. Mg(2+) is required as a cofactor.

The protein resides in the nucleus. It catalyses the reaction ATP-dependent breakage, passage and rejoining of double-stranded DNA.. Its function is as follows. Required for meiotic recombination. Together with mei-P22, mediates DNA cleavage that forms the double-strand breaks (DSB) that initiate meiotic recombination. This Drosophila melanogaster (Fruit fly) protein is Meiotic recombination protein W68.